The sequence spans 307 residues: Ribonuclease Z (307 aa).

Zn(2+) is bound by residues histidine 63, histidine 65, aspartate 67, histidine 68, histidine 141, aspartate 208, and histidine 266. The active-site Proton acceptor is the aspartate 67.

The protein belongs to the RNase Z family. Homodimer. The cofactor is Zn(2+).

The enzyme catalyses Endonucleolytic cleavage of RNA, removing extra 3' nucleotides from tRNA precursor, generating 3' termini of tRNAs. A 3'-hydroxy group is left at the tRNA terminus and a 5'-phosphoryl group is left at the trailer molecule.. Its function is as follows. Zinc phosphodiesterase, which displays some tRNA 3'-processing endonuclease activity. Probably involved in tRNA maturation, by removing a 3'-trailer from precursor tRNA. In Chlamydia pneumoniae (Chlamydophila pneumoniae), this protein is Ribonuclease Z.